Consider the following 598-residue polypeptide: Kinetochore-associated protein KNL-2 homolog (598 aa).

Positions 19-111 constitute an SANTA domain; it reads VVLRDWWLIK…IFGFPPCWER (93 aa). 2 stretches are compositionally biased toward basic and acidic residues: residues 335 to 344 and 371 to 381; these read AKSSKPEKKG and KSAENKRKIDA. 4 disordered regions span residues 335-403, 445-500, 520-542, and 572-598; these read AKSS…NNAK, KESL…EEAE, PEKK…QKRS, and KDGS…LKIK. The span at 383–392 shows a compositional bias: polar residues; that stretch reads KLQSPTSNVA. The span at 527–539 shows a compositional bias: polar residues; sequence QKTNAASTDSLGQ. A required for localization at centromeres region spans residues 538-572; that stretch reads GQKRSRSGRVLVSSLEFWRNQIPVYDMDRNLIQVK.

This sequence belongs to the KNL2 family. In terms of tissue distribution, expressed in shoot apical meristem, leaf primordia, basal parts of emerging leaves, inflorescence meristems, young inflorescences, developing flower buds, developing sepals and pistils, styles and young siliques.

The protein resides in the nucleus. It localises to the nucleoplasm. Its subcellular location is the nuclear body. It is found in the nucleolus. The protein localises to the chromosome. The protein resides in the centromere. Functionally, involved in recognition of centromeres and centromeric localization of the centromere-specific histone CENH3. Required for normal progression of mitosis and meiosis. May play a role in the determination of the epigenetic status of centromeres. Binds DNA and RNA in vitro. The chain is Kinetochore-associated protein KNL-2 homolog from Arabidopsis thaliana (Mouse-ear cress).